The following is a 204-amino-acid chain: Outer-membrane lipoprotein carrier protein (204 aa).

Residues 1 to 21 (MKKIAVTCALLSAFAVSSVWA) form the signal peptide. Residues 169–204 (QRSSYQLKSQQNGAVDMSKFTFTPPQGVTVDDQRNK) form a disordered region. Residues 171-181 (SSYQLKSQQNG) are compositionally biased toward polar residues.

Belongs to the LolA family. In terms of assembly, monomer.

The protein resides in the periplasm. Its function is as follows. Participates in the translocation of lipoproteins from the inner membrane to the outer membrane. Only forms a complex with a lipoprotein if the residue after the N-terminal Cys is not an aspartate (The Asp acts as a targeting signal to indicate that the lipoprotein should stay in the inner membrane). This Cronobacter sakazakii (strain ATCC BAA-894) (Enterobacter sakazakii) protein is Outer-membrane lipoprotein carrier protein.